The sequence spans 569 residues: Proline--tRNA ligase (569 aa).

Belongs to the class-II aminoacyl-tRNA synthetase family. ProS type 1 subfamily. Homodimer.

The protein localises to the cytoplasm. The enzyme catalyses tRNA(Pro) + L-proline + ATP = L-prolyl-tRNA(Pro) + AMP + diphosphate. Catalyzes the attachment of proline to tRNA(Pro) in a two-step reaction: proline is first activated by ATP to form Pro-AMP and then transferred to the acceptor end of tRNA(Pro). As ProRS can inadvertently accommodate and process non-cognate amino acids such as alanine and cysteine, to avoid such errors it has two additional distinct editing activities against alanine. One activity is designated as 'pretransfer' editing and involves the tRNA(Pro)-independent hydrolysis of activated Ala-AMP. The other activity is designated 'posttransfer' editing and involves deacylation of mischarged Ala-tRNA(Pro). The misacylated Cys-tRNA(Pro) is not edited by ProRS. This chain is Proline--tRNA ligase, found in Endomicrobium trichonymphae.